Consider the following 265-residue polypeptide: Interleukin-1 alpha (265 aa).

A propeptide spanning residues 1-108 (MAKVPDLFED…DTEEVIMKPR (108 aa)) is cleaved from the precursor. The residue at position 78 (Lys78) is an N6-acetyllysine. A nuclear localization signal (NLS) region spans residues 78-82 (KKRRL). A Phosphoserine modification is found at Ser83. Residues Asn98 and Asn137 are each glycosylated (N-linked (GlcNAc...) asparagine).

This sequence belongs to the IL-1 family. As to quaternary structure, monomer. Interacts with TMED10; the interaction mediates the translocation from the cytoplasm into the ERGIC (endoplasmic reticulum-Golgi intermediate compartment) and thereby secretion. Interacts with IL1R1. Interacts with S100A13; this interaction is the first step in the export of IL1A, followed by direct translocation of this complex across the plasma membrane. In terms of processing, acetylated within its nuclear localization sequence, which impacts subcellular localization. Proteolytic processed by CAPN1 in a calcium-dependent manner. Cleavage from 31 kDa precursor to 18 kDa biologically active molecules. Post-translationally, phosphorylated. Phosphorylation greatly enhances susceptibility to digestion and promotes the conversion of pre-IL1A alpha to the biologically active IL1A.

Its subcellular location is the nucleus. It localises to the cytoplasm. The protein localises to the secreted. Its function is as follows. Cytokine constitutively present intracellularly in nearly all resting non-hematopoietic cells that plays an important role in inflammation and bridges the innate and adaptive immune systems. After binding to its receptor IL1R1 together with its accessory protein IL1RAP, forms the high affinity interleukin-1 receptor complex. Signaling involves the recruitment of adapter molecules such as MYD88, IRAK1 or IRAK4. In turn, mediates the activation of NF-kappa-B and the three MAPK pathways p38, p42/p44 and JNK pathways. Within the cell, acts as an alarmin and cell death results in its liberation in the extracellular space after disruption of the cell membrane to induce inflammation and alert the host to injury or damage. In addition to its role as a danger signal, which occurs when the cytokine is passively released by cell necrosis, directly senses DNA damage and acts as signal for genotoxic stress without loss of cell integrity. This chain is Interleukin-1 alpha (IL1A), found in Canis lupus familiaris (Dog).